We begin with the raw amino-acid sequence, 258 residues long: MAMPEFTLRQLLEAGVHFGHHTRRWNPRMAPFIFGVRNQVHILDLQQTVPLLDRSLRAIRDVVAGGGRVLFVGTKRAAAEYVAESAQRCGQYYVNHRWLGGMLTNWKTITGSIKRLRQIDEMLAGDTTGLTKKEVLDITRDREKLERALGGIKDMGGLPDILFIIDTNKEKLAVEEANKLGIPVVAVLDSNSDPSGVTYPIPGNDDAIRAITMYCDLVASAVLDGISAEMIASGRDLGAAEELAPEILPEPEAEQATA.

It belongs to the universal ribosomal protein uS2 family.

This Granulibacter bethesdensis (strain ATCC BAA-1260 / CGDNIH1) protein is Small ribosomal subunit protein uS2.